The following is a 272-amino-acid chain: Hydroxyethylthiazole kinase (272 aa).

Methionine 45 contributes to the substrate binding site. Residues arginine 121 and threonine 168 each coordinate ATP. Glycine 195 is a substrate binding site.

It belongs to the Thz kinase family. In terms of assembly, homotrimer. Mg(2+) serves as cofactor.

The enzyme catalyses 5-(2-hydroxyethyl)-4-methylthiazole + ATP = 4-methyl-5-(2-phosphooxyethyl)-thiazole + ADP + H(+). The protein operates within cofactor biosynthesis; thiamine diphosphate biosynthesis; 4-methyl-5-(2-phosphoethyl)-thiazole from 5-(2-hydroxyethyl)-4-methylthiazole: step 1/1. Catalyzes the phosphorylation of the hydroxyl group of 4-methyl-5-beta-hydroxyethylthiazole (THZ). The sequence is that of Hydroxyethylthiazole kinase from Bacillus subtilis (strain 168).